Here is a 485-residue protein sequence, read N- to C-terminus: Ribulose bisphosphate carboxylase large chain (485 aa).

Substrate-binding residues include Asn124 and Thr174. Catalysis depends on Lys176, which acts as the Proton acceptor. Lys178 lines the substrate pocket. Positions 202, 204, and 205 each coordinate Mg(2+). The residue at position 202 (Lys202) is an N6-carboxylysine. Residue His294 is the Proton acceptor of the active site. 3 residues coordinate substrate: Arg295, His327, and Ser379.

This sequence belongs to the RuBisCO large chain family. Type I subfamily. As to quaternary structure, heterohexadecamer of 8 large chains and 8 small chains. The cofactor is Mg(2+).

The enzyme catalyses 2 (2R)-3-phosphoglycerate + 2 H(+) = D-ribulose 1,5-bisphosphate + CO2 + H2O. The catalysed reaction is D-ribulose 1,5-bisphosphate + O2 = 2-phosphoglycolate + (2R)-3-phosphoglycerate + 2 H(+). Functionally, ruBisCO catalyzes two reactions: the carboxylation of D-ribulose 1,5-bisphosphate, the primary event in carbon dioxide fixation, as well as the oxidative fragmentation of the pentose substrate in the photorespiration process. Both reactions occur simultaneously and in competition at the same active site. The polypeptide is Ribulose bisphosphate carboxylase large chain (Rhodopseudomonas palustris (strain BisB18)).